A 303-amino-acid chain; its full sequence is MKKLFFLLLLLFLIYLGYDYVNEALFSQEKVEFQNYDQNPKEHLENSGTSENTQEKTITEEQVYQGNLLLINSKYPVRQESVKSDIVNLSKHDELINGYGLLDSNIYMSKEIAQKFSEMVNDAVKGGVSHFIINSGYRDFDEQSVLYQEMGAEYALPAGYSEHNSGLSLDVGSSLTKMERAPEGKWIEENAWKYGFILRYPEDKTELTGIQYEPWHIRYVGLPHSAIMKEKNFVLEEYMDYLKEEKTISVSVNGEKYEIFYYPVTKNTTIHVPTNLRYEISGNNIDGVIVTVFPGSTHTNSRR.

The helical transmembrane segment at 7 to 23 (LLLLLFLIYLGYDYVNE) threads the bilayer. Positions 37 to 56 (DQNPKEHLENSGTSENTQEK) are disordered. Substrate contacts are provided by residues 154–156 (YAL) and serine 161. Positions 163 and 170 each coordinate Zn(2+). Catalysis depends on glutamate 213, which acts as the Proton donor/acceptor. Histidine 216 contacts Zn(2+).

Belongs to the peptidase M15B family. It depends on Zn(2+) as a cofactor.

The protein resides in the cell membrane. The DD-carboxypeptidase activity is not inhibited by beta-lactam antibiotics. Cleaves the C-terminal D-alanine residue of UDP-muramyl-pentapeptide (UDP-MurNAc-L-Ala-D-Glu-mDAP-D-Ala-D-Ala) or diacetyl-L-Lys-D-Ala-D-Ala. However the physiological substrate likely contains L-Lys instead of mDAP at the third position of the pentapeptide. Also releases the C-terminal D-lactate from UDP-MurNAc-L-Ala-D-Glu-mDAP-D-Ala-D-lactate, a depsipeptide produced by the vancomycin resistance protein VanA. Therefore, VanY should contribute in vivo to the hydrolysis of both the D-alanyl-D-alanine- and the depsipeptide-containing peptidoglycan precursors. Is not necessary for vancomycin resistance of E.faecium BM4147 and perhaps not W14-9. Does not display transpeptidase or beta-lactamase activities. The polypeptide is D-alanyl-D-alanine carboxypeptidase (Enterococcus faecium (Streptococcus faecium)).